Consider the following 114-residue polypeptide: Large ribosomal subunit protein bL20c (114 aa).

This sequence belongs to the bacterial ribosomal protein bL20 family.

Its subcellular location is the plastid. It is found in the chloroplast. Functionally, binds directly to 23S ribosomal RNA and is necessary for the in vitro assembly process of the 50S ribosomal subunit. It is not involved in the protein synthesizing functions of that subunit. The chain is Large ribosomal subunit protein bL20c (rpl20) from Trieres chinensis (Marine centric diatom).